Reading from the N-terminus, the 43-residue chain is Bacteriocin weissellin-A (43 aa).

Residues Cys-9 and Cys-14 are joined by a disulfide bond.

The protein localises to the secreted. Its function is as follows. Highly active against Gram-positive bacteria M.flavus strain ATCC 400, M.luteus strain CECT241, C.soprogenes strain NCTC533, L.monocytogenes strain ATCC 19111, L.inocua strain ATCC BAA-680D and S.carnosus strain LMG13564. Less active against B.cereus strain LMG13569, C.thiaminolyticum strain ATCC 15579, E.faecalis strain NCTC8176, L.lactis strain LM0230, L.casei strain ATCC 344, L.lactis strain IL1403, L.jensenii strain ATCC 25258, L.plantarum strain CECT220, L.brevis strain ATCC 8287, L.bulgaricus strain LMG13551, P.acidilactici strain ATCC 25740, P.pentosaceus strain ATCC 33316 and P.pentosaceus strain LMG13560. Weakly active against L.mesenteroides strain ATCC 19254, L.lactis strain ATCC 1454, L.sakei strain CECT906T, L.lactis subsp. cremoris strain MC1363 and L.curvatus strain ATCC 51436. Not active against Gram-negative bacterium S.enteritidis strain ATCC 13076. The mode of action appears to be non-lytic. Inactivated by proteinase K, but insensitive to trypsin, alpha-chymotrypsin, pepsin and papain. The sequence is that of Bacteriocin weissellin-A from Weissella paramesenteroides (Leuconostoc paramesenteroides).